The primary structure comprises 57 residues: MAVPKRRTSKTRKNKRRTHFKISVPGMTECPNCGEYKLSHRVCKNCGSYKGEDVVSK.

It belongs to the bacterial ribosomal protein bL32 family.

The sequence is that of Large ribosomal subunit protein bL32 from Staphylococcus saprophyticus subsp. saprophyticus (strain ATCC 15305 / DSM 20229 / NCIMB 8711 / NCTC 7292 / S-41).